Consider the following 325-residue polypeptide: Transaldolase (325 aa).

The active-site Schiff-base intermediate with substrate is the Lys-125.

It belongs to the transaldolase family. Type 2 subfamily.

The protein localises to the cytoplasm. It carries out the reaction D-sedoheptulose 7-phosphate + D-glyceraldehyde 3-phosphate = D-erythrose 4-phosphate + beta-D-fructose 6-phosphate. It participates in carbohydrate degradation; pentose phosphate pathway; D-glyceraldehyde 3-phosphate and beta-D-fructose 6-phosphate from D-ribose 5-phosphate and D-xylulose 5-phosphate (non-oxidative stage): step 2/3. Its function is as follows. Transaldolase is important for the balance of metabolites in the pentose-phosphate pathway. This is Transaldolase (tal) from Campylobacter jejuni subsp. jejuni serotype O:2 (strain ATCC 700819 / NCTC 11168).